Consider the following 190-residue polypeptide: HTH-type transcriptional repressor CutR (190 aa).

Residues proline 3–leucine 58 form the HTH deoR-type domain. Positions leucine 20–aspartate 39 form a DNA-binding region, H-T-H motif.

It localises to the cytoplasm. In terms of biological role, may act as a negative transcriptional regulator of cutJ/ycnJ in the presence of copper. May use copper as a corepressor. In Bacillus subtilis (strain 168), this protein is HTH-type transcriptional repressor CutR.